Consider the following 797-residue polypeptide: Short transient receptor potential channel 4-associated protein (797 aa).

At Ala-2 the chain carries N-acetylalanine. The segment at 2-400 (AAAPAAAGAG…VLYVLCVLLM (399 aa)) is interaction with TNFRSF1A.

As to quaternary structure, component of the DCX(TRPC4AP) E3 ubiquitin ligase complex, at least composed of CUL4A, DDB1, TRPC4AP/TRUSS and RBX1. Interacts with MYC. Constitutively associated with TNFRSF1A. Directly interacts with TRADD, TRAF2, CHUK, IKBKB and IKBKG. Interacts with TRPC1, TRPC4 and TRPC5. Phosphorylated by GSK3B; phosphorylation is required for ubiquitination. Post-translationally, ubiquitinated by a SCF (SKP1-CUL1-F-box protein) E3 ubiquitin-protein ligase containing SKP2, leading to its degradation. Phosphorylation by GSK3B is required for ubiquitination. Widely expressed, with high levels in heart, liver and testis.

Its subcellular location is the cytoplasm. It is found in the perinuclear region. Its pathway is protein modification; protein ubiquitination. Its function is as follows. Substrate-recognition component of a DCX (DDB1-CUL4-X-box) E3 ubiquitin-protein ligase complex required for cell cycle control. The DCX(TRPC4AP) complex specifically mediates the polyubiquitination and subsequent degradation of MYC as part of the DesCEND (destruction via C-end degrons) pathway. The DesCEND (destruction via C-end degrons) pathway recognizes a C-degron located at the extreme C terminus of target proteins, leading to their ubiquitination and degradation. The DCX(TRPC4AP) complex specifically recognizes proteins with an arginine at the minus 3 position (R-3 motif) at the C-terminus, such as MYC, leading to their ubiquitination and degradation. Also participates in the activation of NFKB1 in response to ligation of TNFRSF1A, possibly by linking TNFRSF1A to the IKK signalosome. Involved in JNK activation via its interaction with TRAF2. Also involved in elevation of endoplasmic reticulum Ca(2+) storage reduction in response to CHRM1. The chain is Short transient receptor potential channel 4-associated protein from Mus musculus (Mouse).